The primary structure comprises 81 residues: Sulfur carrier protein TusA (81 aa).

The active-site Cysteine persulfide intermediate is the Cys-19.

The protein belongs to the sulfur carrier protein TusA family. Interacts with IscS.

It is found in the cytoplasm. It participates in tRNA modification. In terms of biological role, sulfur carrier protein involved in sulfur trafficking in the cell. Part of a sulfur-relay system required for 2-thiolation during synthesis of 2-thiouridine of the modified wobble base 5-methylaminomethyl-2-thiouridine (mnm(5)s(2)U) in tRNA. Interacts with IscS and stimulates its cysteine desulfurase activity. Accepts an activated sulfur from IscS, which is then transferred to TusD, and thus determines the direction of sulfur flow from IscS to 2-thiouridine formation. Also appears to be involved in sulfur transfer for the biosynthesis of molybdopterin. The chain is Sulfur carrier protein TusA from Klebsiella pneumoniae subsp. pneumoniae (strain ATCC 700721 / MGH 78578).